Reading from the N-terminus, the 419-residue chain is MATIILGSQWGDEGKGKLSDILCQKARVCARAAGGHNAGHSVVANGVSYDFHLLPSGLVNPQCTNLIGSGVVFNVQAFFKELAALEEKGLSHARKNLLVSDRAQVNLELHARVDGLEERELAGNKIGTTGRGIGPSYANKAARNGIRVHEIFDQESFEAKLRRLAEGYKKRFGDLLEYDVEEEIARFRDYREKLPDFVVDAVNYMQAAQASGVDILIEGANALMLDIDYGTYPFVTSSNTGLGGVITGLAVNPRRINVAKAYTTRVGEGIFKSEDVGEAGKKLQDIGREWGVSTGRKRRCGWLDLVVLKYSASVNYYTAWNLTKLDVLDTFPTLKVAVAYKDPETGKELEYFPADLGYLERCEVVYREFEGWQTPTTAVKKFEDLPRQAQMYVRFVEEFTGVPVKWIGTGPGRDDMIYL.

Residues 11–17 (GDEGKGK) and 39–41 (GHS) each bind GTP. Catalysis depends on Asp12, which acts as the Proton acceptor. Positions 12 and 39 each coordinate Mg(2+). Residues 12-15 (DEGK), 37-40 (NAGH), Thr129, Arg143, Asn221, Thr236, and Arg296 contribute to the IMP site. Residue His40 is the Proton donor of the active site. Residue 292–298 (VSTGRKR) participates in substrate binding. Residues Arg298, 324–326 (KLD), and 408–410 (GTG) contribute to the GTP site.

Belongs to the adenylosuccinate synthetase family. In terms of assembly, homodimer. Requires Mg(2+) as cofactor.

It is found in the cytoplasm. The catalysed reaction is IMP + L-aspartate + GTP = N(6)-(1,2-dicarboxyethyl)-AMP + GDP + phosphate + 2 H(+). It functions in the pathway purine metabolism; AMP biosynthesis via de novo pathway; AMP from IMP: step 1/2. Plays an important role in the de novo pathway and in the salvage pathway of purine nucleotide biosynthesis. Catalyzes the first committed step in the biosynthesis of AMP from IMP. In Chaetomium globosum (strain ATCC 6205 / CBS 148.51 / DSM 1962 / NBRC 6347 / NRRL 1970) (Soil fungus), this protein is Adenylosuccinate synthetase.